The chain runs to 130 residues: Con-Ins G2b (130 aa).

A signal peptide spans 1-23; sequence MTTSSYFLLVALGLLLYVRQSFS. Intrachain disulfides connect cysteine 29-cysteine 100, cysteine 41-cysteine 103, cysteine 53-cysteine 116, and cysteine 102-cysteine 107. Proline 34 is subject to 4-hydroxyproline; partial. Positions 54-77 are disordered; sequence EEEEARRGGTNDGGKKRRRASPLR. A propeptide spans 59–92 (c peptide); the sequence is RRGGTNDGGKKRRRASPLRKRRRFISMLKARAKR. Basic residues predominate over residues 68–77; the sequence is KKRRRASPLR. At glutamate 111 the chain carries 4-carboxyglutamate; partial.

This sequence belongs to the insulin family. Heterodimer of A and B chains; disulfide-linked. In terms of tissue distribution, expressed by the venom gland.

Its subcellular location is the secreted. In terms of biological role, this venom insulin, from a fish-hunting cone snail, facilitates prey capture by rapidly inducing hypoglycemic shock. Intraperitoneal injection of this peptide into zebrafish lowers blood glucose with the same potency than human insulin. In vivo, when applied to water, this peptide reduces overall locomotor activity of zebrafish larvae, observed as a significant decrease in the percentage of time spent swimming and movement frequency. The polypeptide is Con-Ins G2b (Conus geographus (Geography cone)).